We begin with the raw amino-acid sequence, 553 residues long: LIM domain-containing protein B (553 aa).

Residues 43 to 115 form a disordered region; that stretch reads LTYKDPNVST…SINNNISNNN (73 aa). Low complexity predominate over residues 99 to 114; the sequence is GPGLPNNSINNNISNN. LIM zinc-binding domains lie at 205–262, 263–322, 328–387, 388–447, and 448–505; these read PICG…ELFS, PRCF…RQKR, EICS…KQIL, NICG…FFGR, and QCFK…LPKE. The disordered stretch occupies residues 534–553; sequence ELKKERERAAKEKEKESKAK.

The protein localises to the cytoplasm. It localises to the cell cortex. It is found in the cytoskeleton. Its function is as follows. Regulates and controls rearrangements of the actin cytoskeleton. Required for tip formation, morphogenesis, cell adhesion and motility, chemotaxis and aggregates formation. May function downstream of paxB. This Dictyostelium discoideum (Social amoeba) protein is LIM domain-containing protein B (limB).